The sequence spans 39 residues: MHLRSRWWLALLYCKDPVSRSATTPKVETRASCLLSRAF.

The first 21 residues, 1 to 21, serve as a signal peptide directing secretion; the sequence is MHLRSRWWLALLYCKDPVSRS.

This is an uncharacterized protein from Saccharomyces cerevisiae (strain ATCC 204508 / S288c) (Baker's yeast).